Reading from the N-terminus, the 273-residue chain is 2,3,4,5-tetrahydropyridine-2,6-dicarboxylate N-succinyltransferase (273 aa).

Substrate-binding residues include Arg105 and Asp142.

This sequence belongs to the transferase hexapeptide repeat family. Homotrimer.

It is found in the cytoplasm. It carries out the reaction (S)-2,3,4,5-tetrahydrodipicolinate + succinyl-CoA + H2O = (S)-2-succinylamino-6-oxoheptanedioate + CoA. It participates in amino-acid biosynthesis; L-lysine biosynthesis via DAP pathway; LL-2,6-diaminopimelate from (S)-tetrahydrodipicolinate (succinylase route): step 1/3. The chain is 2,3,4,5-tetrahydropyridine-2,6-dicarboxylate N-succinyltransferase from Bordetella avium (strain 197N).